A 215-amino-acid chain; its full sequence is Venom allergen 5.02 (215 aa).

An N-terminal signal peptide occupies residues 1-10 (PIINLSFGEA). Intrachain disulfides connect Cys-14–Cys-26, Cys-18–Cys-111, Cys-36–Cys-104, and Cys-181–Cys-198. Residues 55–200 (VNRHNQFRQK…WHTHYLVCNY (146 aa)) form the SCP domain.

Belongs to the CRISP family. Venom allergen 5-like subfamily. In terms of tissue distribution, expressed by the venom gland.

It localises to the secreted. The polypeptide is Venom allergen 5.02 (Dolichovespula maculata (Bald-faced hornet)).